Reading from the N-terminus, the 314-residue chain is Glucocorticoid receptor (314 aa).

The segment at 1–44 is disordered; the sequence is ASAAVSAAPTEKEFPKTHSDVSSEQQNLKGQKGSNGGSMKLHTT. The tract at residues 1 to 281 is modulating; the sequence is ASAAVSAAPT…SAATGPPPKL (281 aa). Residues 10–21 show a composition bias toward basic and acidic residues; it reads TEKEFPKTHSDV. Ser-65, Ser-73, and Ser-88 each carry phosphoserine. A Glycyl lysine isopeptide (Lys-Gly) (interchain with G-Cter in SUMO2) cross-link involves residue Lys-120. At Ser-129 the chain carries Phosphoserine. Residues Lys-139 and Lys-155 each participate in a glycyl lysine isopeptide (Lys-Gly) (interchain with G-Cter in SUMO); alternate cross-link. Residues Lys-139 and Lys-155 each participate in a glycyl lysine isopeptide (Lys-Gly) (interchain with G-Cter in SUMO2); alternate cross-link. Phosphoserine is present on Ser-266. A Glycyl lysine isopeptide (Lys-Gly) (interchain with G-Cter in ubiquitin) cross-link involves residue Lys-280. The NR C4-type zinc finger occupies 282–314; the sequence is CLVCSDEASGCHYGVLTCGSCKVFFKRAVEGQH. A DNA-binding region (nuclear receptor) is located at residues 282 to 314; the sequence is CLVCSDEASGCHYGVLTCGSCKVFFKRAVEGQH.

This sequence belongs to the nuclear hormone receptor family. NR3 subfamily. Heteromultimeric cytoplasmic complex with HSP90AA1, HSPA1A/HSPA1B, and FKBP5 or another immunophilin such as PPID, STIP1, or the immunophilin homolog PPP5C. Upon ligand binding FKBP5 dissociates from the complex and FKBP4 takes its place, thereby linking the complex to dynein and mediating transport to the nucleus, where the complex dissociates. Probably forms a complex composed of chaperones HSP90 and HSP70, co-chaperones CDC37, PPP5C, TSC1 and client protein TSC2, CDK4, AKT, RAF1 and NR3C1; this complex does not contain co-chaperones STIP1/HOP and PTGES3/p23. Directly interacts with UNC45A. Binds to DNA as a homodimer, and as heterodimer with NR3C2 or the retinoid X receptor. Binds STAT5A and STAT5B homodimers and heterodimers. Interacts with NRIP1, POU2F1, POU2F2 and TRIM28. Interacts with several coactivator complexes, including the SMARCA4 complex, CREBBP/EP300, TADA2L (Ada complex) and p160 coactivators such as NCOA2 and NCOA6. Interaction with BAG1 inhibits transactivation. Interacts with HEXIM1 and TGFB1I1. Interacts with NCOA1. Interacts with NCOA3, SMARCA4, SMARCC1, SMARCD1, and SMARCE1. Interacts with CLOCK, CRY1 and CRY2 in a ligand-dependent fashion. Interacts with CIART. Interacts with RWDD3. Interacts with UBE2I/UBC9 and this interaction is enhanced in the presence of RWDD3. Interacts with GRIP1. Interacts with NR4A3 (via nuclear receptor DNA-binding domain), represses transcription activity of NR4A3 on the POMC promoter Nur response element (NurRE). Directly interacts with PNRC2 to attract and form a complex with UPF1 and DCP1A; the interaction leads to rapid mRNA degradation. Interacts with GSK3B. Interacts with FNIP1 and FNIP2. Interacts (via C-terminus) with HNRNPU (via C-terminus). Interacts with MCM3AP. Interacts (via domain NR LBD) with HSP90AA1 and HSP90AB1. In the absence of hormonal ligand, interacts with TACC1. Interacts (via NR LBD domain) with ZNF764 (via KRAB domain); the interaction regulates transcription factor activity of NR3C1 by directing its actions toward certain biologic pathways. Post-translationally, acetylation by CLOCK reduces its binding to glucocorticoid response elements and its transcriptional activity. Increased proteasome-mediated degradation in response to glucocorticoids. In terms of processing, phosphorylated in the absence of hormone; becomes hyperphosphorylated in the presence of glucocorticoid. The Ser-65, Ser-88 and Ser-266-phosphorylated forms are mainly cytoplasmic, and the Ser-73-phosphorylated form is nuclear. Phosphorylation at Ser-73 increases transcriptional activity. Phosphorylation at Ser-65, Ser-88 and Ser-266 decreases signaling capacity. Phosphorylation at Ser-266 may protect from glucocorticoid-induced apoptosis. Phosphorylation at Ser-65 and Ser-73 is not required in regulation of chromosome segregation. May be dephosphorylated by PPP5C, attenuates NR3C1 action. Post-translationally, ubiquitinated by UBR5, leading to its degradation: UBR5 specifically recognizes and binds ligand-bound NR3C1 when it is not associated with coactivators (NCOAs). In presence of NCOAs, the UBR5-degron is not accessible, preventing its ubiquitination and degradation. Sumoylation at Lys-139 and Lys-155 negatively regulates its transcriptional activity. Heat shock increases sumoylation in a RWDD3-dependent manner.

The protein localises to the cytoplasm. It localises to the nucleus. It is found in the mitochondrion. Its subcellular location is the cytoskeleton. The protein resides in the spindle. The protein localises to the microtubule organizing center. It localises to the centrosome. It is found in the chromosome. Its subcellular location is the nucleoplasm. Receptor for glucocorticoids (GC). Has a dual mode of action: as a transcription factor that binds to glucocorticoid response elements (GRE), both for nuclear and mitochondrial DNA, and as a modulator of other transcription factors. Affects inflammatory responses, cellular proliferation and differentiation in target tissues. Involved in chromatin remodeling. Plays a role in rapid mRNA degradation by binding to the 5' UTR of target mRNAs and interacting with PNRC2 in a ligand-dependent manner which recruits the RNA helicase UPF1 and the mRNA-decapping enzyme DCP1A, leading to RNA decay. Could act as a coactivator for STAT5-dependent transcription upon growth hormone (GH) stimulation and could reveal an essential role of hepatic GR in the control of body growth. Mediates glucocorticoid-induced apoptosis. Promotes accurate chromosome segregation during mitosis. May act as a tumor suppressor. May play a negative role in adipogenesis through the regulation of lipolytic and antilipogenic gene expression. In Ovis aries (Sheep), this protein is Glucocorticoid receptor (NR3C1).